A 139-amino-acid chain; its full sequence is MLPLSLLKTAQNHPMLVELKNGETYNGHLVSCDNWMNINLREVICTSRDGDKFWRMPECYIRGSTIKYLRIPDEIIDMVKEEVVAKGRGRGGLQQQKQQKGRGMGGAGRGVFGGRGRGGIPGTGRGQPEKKPGRQAGKQ.

Met-1 is subject to N-acetylmethionine. The Sm domain occupies 2 to 75; it reads LPLSLLKTAQ…IKYLRIPDEI (74 aa). Residue Lys-80 forms a Glycyl lysine isopeptide (Lys-Gly) (interchain with G-Cter in SUMO2) linkage. The disordered stretch occupies residues 87-139; sequence GRGRGGLQQQKQQKGRGMGGAGRGVFGGRGRGGIPGTGRGQPEKKPGRQAGKQ. Residues 102 to 125 show a composition bias toward gly residues; that stretch reads RGMGGAGRGVFGGRGRGGIPGTGR.

The protein belongs to the snRNP Sm proteins family. Component of the precatalytic spliceosome (spliceosome B complex). Component of the U4/U6-U5 tri-snRNP complex, a building block of the precatalytic spliceosome (spliceosome B complex). The U4/U6-U5 tri-snRNP complex is composed of the U4, U6 and U5 snRNAs and at least PRPF3, PRPF4, PRPF6, PRPF8, PRPF31, SNRNP200, TXNL4A, SNRNP40, SNRPB, SNRPD1, SNRPD2, SNRPD3, SNRPE, SNRPF, SNRPG, DDX23, CD2BP2, PPIH, SNU13, EFTUD2, SART1 and USP39, plus LSM2, LSM3, LSM4, LSM5, LSM6, LSM7 and LSM8. LSM2, LSM3, LSM4, LSM5, LSM6, LSM7 and LSM8 form a heptameric, ring-shaped subcomplex (the LSM2-8 complex) that is part of the U4/U6-U5 tri-snRNP complex and the precatalytic spliceosome.

The protein resides in the nucleus. In terms of biological role, plays a role in pre-mRNA splicing as component of the U4/U6-U5 tri-snRNP complex that is involved in spliceosome assembly, and as component of the precatalytic spliceosome (spliceosome B complex). The heptameric LSM2-8 complex binds specifically to the 3'-terminal U-tract of U6 snRNA. In Bos taurus (Bovine), this protein is U6 snRNA-associated Sm-like protein LSm4 (LSM4).